We begin with the raw amino-acid sequence, 314 residues long: UDP-N-acetylenolpyruvoylglucosamine reductase (314 aa).

The FAD-binding PCMH-type domain maps to 27–192; the sequence is KIGGKARYIV…LRAVFCLKFA (166 aa). Arginine 171 is an active-site residue. The active-site Proton donor is serine 223. Residue glutamate 293 is part of the active site.

The protein belongs to the MurB family. FAD serves as cofactor.

Its subcellular location is the cytoplasm. It catalyses the reaction UDP-N-acetyl-alpha-D-muramate + NADP(+) = UDP-N-acetyl-3-O-(1-carboxyvinyl)-alpha-D-glucosamine + NADPH + H(+). Its pathway is cell wall biogenesis; peptidoglycan biosynthesis. Cell wall formation. The sequence is that of UDP-N-acetylenolpyruvoylglucosamine reductase from Caldicellulosiruptor bescii (strain ATCC BAA-1888 / DSM 6725 / KCTC 15123 / Z-1320) (Anaerocellum thermophilum).